Reading from the N-terminus, the 131-residue chain is Small ribosomal subunit protein bS6 (131 aa).

Residues 98-131 are disordered; that stretch reads EASPMVKAKDERRERREDFANETADDSEAGDSEE. Over residues 104 to 116 the composition is skewed to basic and acidic residues; the sequence is KAKDERRERREDF. The segment covering 120 to 131 has biased composition (acidic residues); the sequence is TADDSEAGDSEE.

The protein belongs to the bacterial ribosomal protein bS6 family.

Binds together with bS18 to 16S ribosomal RNA. The polypeptide is Small ribosomal subunit protein bS6 (Klebsiella pneumoniae subsp. pneumoniae (strain ATCC 700721 / MGH 78578)).